The sequence spans 228 residues: Ribulose-phosphate 3-epimerase (228 aa).

Serine 9 serves as a coordination point for substrate. A divalent metal cation is bound by residues histidine 34, aspartate 36, and histidine 70. The active-site Proton acceptor is the aspartate 36. Substrate contacts are provided by residues histidine 70, 146–149, 175–177, and 197–198; these read GKGG, DGG, and GT. Aspartate 175 provides a ligand contact to a divalent metal cation. Aspartate 175 serves as the catalytic Proton donor.

This sequence belongs to the ribulose-phosphate 3-epimerase family. Co(2+) serves as cofactor. The cofactor is Fe(2+). It depends on Mn(2+) as a cofactor. Zn(2+) is required as a cofactor.

The enzyme catalyses D-ribulose 5-phosphate = D-xylulose 5-phosphate. The protein operates within carbohydrate degradation; pentose phosphate pathway; D-xylulose 5-phosphate from D-ribulose 5-phosphate (non-oxidative stage): step 1/1. In terms of biological role, catalyzes the reversible epimerization of D-ribulose 5-phosphate to D-xylulose 5-phosphate. This Schizosaccharomyces pombe (strain 972 / ATCC 24843) (Fission yeast) protein is Ribulose-phosphate 3-epimerase.